The following is a 91-amino-acid chain: UPF0250 protein NGO_0791 (91 aa).

The protein belongs to the UPF0250 family.

The polypeptide is UPF0250 protein NGO_0791 (Neisseria gonorrhoeae (strain ATCC 700825 / FA 1090)).